The sequence spans 256 residues: UPF0259 membrane protein YPO2199/y2042/YP_1997 (256 aa).

Transmembrane regions (helical) follow at residues 20–40 (IAAI…LNQT), 90–110 (FSAL…IAMV), 118–138 (ALQA…LMFI), 141–161 (LVIQ…AIAL), 192–212 (LIVP…FLIS), and 221–241 (IATI…LVYL).

This sequence belongs to the UPF0259 family.

The protein resides in the cell inner membrane. This Yersinia pestis protein is UPF0259 membrane protein YPO2199/y2042/YP_1997.